Here is a 406-residue protein sequence, read N- to C-terminus: RILP-like protein 1 (406 aa).

Residue Ser-7 is modified to Phosphoserine. Residues 10–97 (AALSALEKNV…RVERMDRIEK (88 aa)) enclose the RH1 domain. At Cys-47 the chain carries S-nitrosocysteine. A coiled-coil region spans residues 76–258 (ELDELRLELD…KLRERLQGEH (183 aa)). 2 disordered regions span residues 255–280 (QGEH…ESIS) and 330–354 (EIEE…QPES). Ser-259 bears the Phosphoserine mark. A compositionally biased stretch (acidic residues) spans 262-280 (GEEEEAEIPPQPDGEESIS). One can recognise an RH2 domain in the interval 294–359 (RPRFTLQELR…PQPESGIKRL (66 aa)).

The protein belongs to the RILPL family. As to quaternary structure, interacts (when S-nitrosylated) with GAPDH. Interacts with RAB8A; interaction is dependent on the phosphorylation of 'Thr-72' of RAB8A. Interacts with RAB10 and RAB12; the interaction is dependent on the phosphorylation of 'Thr-73' of RAB10, and 'Ser-105' of RAB12. S-nitrosylation is required for the interaction with GAPDH. As to expression, highly expressed in heart, skeletal muscle, brain and lung (at protein level).

The protein localises to the cytoplasm. Its subcellular location is the cytosol. The protein resides in the cytoskeleton. It is found in the microtubule organizing center. It localises to the centrosome. The protein localises to the centriole. Its subcellular location is the cilium basal body. Its function is as follows. Plays a role in the regulation of cell shape and polarity. Plays a role in cellular protein transport, including protein transport away from primary cilia. Neuroprotective protein, which acts by sequestring GAPDH in the cytosol and prevent the apoptotic function of GAPDH in the nucleus. Competes with SIAH1 for binding GAPDH. Does not regulate lysosomal morphology and distribution. Binds to RAB10 following LRRK2-mediated RAB10 phosphorylation which leads to inhibition of ciliogenesis. This is RILP-like protein 1 (Rilpl1) from Rattus norvegicus (Rat).